A 350-amino-acid chain; its full sequence is Transcriptional activator hacA (350 aa).

The interval 1–118 (MKSADRFSPV…RLEMEKLESE (118 aa)) is disordered. Positions 35–47 (PADTSLQTKNVVA) are enriched in polar residues. Composition is skewed to basic and acidic residues over residues 81-95 (KTED…ERVL) and 104-118 (SRER…LESE). In terms of domain architecture, bZIP spans 87 to 150 (EQRRIERVLR…NRLSQQVAQL (64 aa)). Residues 89–142 (RRIERVLRNRAAAQTSRERKRLEMEKLESEKIDMEQQNQFLLQRLAQMEAENNR) are basic motif. The tract at residues 143-150 (LSQQVAQL) is leucine-zipper. Disordered regions lie at residues 152 to 175 (AEVR…PTLT), 194 to 218 (PTPS…DLTQ), and 328 to 350 (SLQP…AGSA). A compositionally biased stretch (low complexity) spans 160–175 (STPTSSSPASVSPTLT). Polar residues-rich tracts occupy residues 196–211 (PSVT…SSLA) and 329–340 (LQPSHGASTSRC).

This sequence belongs to the bZIP family. As to quaternary structure, homodimer.

The protein resides in the nucleus. Functionally, transcriptional activator involved in the unfolded protein response (UPR) pathway. Recognizes and binds to the UPR element (UPRE) in the promoter of UPR-regulated genes. Increases the synthesis of endoplasmic reticulum-resident proteins required for protein folding as well as components of the secretory pathway. In Emericella nidulans (strain FGSC A4 / ATCC 38163 / CBS 112.46 / NRRL 194 / M139) (Aspergillus nidulans), this protein is Transcriptional activator hacA (hacA).